The sequence spans 248 residues: MAALQQTPITFQSRSPPPTQIISGPTAKLSFSGGLKLPKLTIKLRSNRTSRRGGGAAGSKMVASAAGSYANALADIAKSNGTLEQTTADLEKIEKISDDEAVFNFFVSPIVGEEKKRELVDEIVSSSSIQPHVANFLNILVDMKRVELIKEIVKEFEKVYNTLTDTELAVVTSVVKLESQHLAQIAKGVQRLTGSKNVRIKTVIDESLVAGFTIRYGNSGSKLIDMSVKKQLEDIAAQLEIGDIQLAV.

A chloroplast-targeting transit peptide spans 1-60; the sequence is MAALQQTPITFQSRSPPPTQIISGPTAKLSFSGGLKLPKLTIKLRSNRTSRRGGGAAGSK.

The protein belongs to the ATPase delta chain family. As to quaternary structure, F-type ATPases have 2 components, CF(1) - the catalytic core - and CF(0) - the membrane proton channel. CF(1) has five subunits: alpha(3), beta(3), gamma(1), delta(1), epsilon(1). CF(0) has three main subunits: a, b and c.

The protein localises to the plastid. It localises to the chloroplast thylakoid membrane. In terms of biological role, this protein seems to be part of the stalk that links CF(0) to CF(1). It either transmits conformational changes from CF(0) into CF(1) or is implicated in proton conduction. This is ATP synthase delta chain, chloroplastic (ATPD) from Nicotiana tabacum (Common tobacco).